The sequence spans 139 residues: Ribonuclease VapC39 (139 aa).

One can recognise a PINc domain in the interval 4 to 133; it reads LLDVNVLIAL…DAALADSASA (130 aa). Positions 6 and 106 each coordinate Mg(2+).

This sequence belongs to the PINc/VapC protein family. Mg(2+) is required as a cofactor.

In terms of biological role, toxic component of a type II toxin-antitoxin (TA) system. An RNase. Its toxic effect is neutralized by coexpression with cognate antitoxin VapB39. The polypeptide is Ribonuclease VapC39 (Mycobacterium tuberculosis (strain CDC 1551 / Oshkosh)).